We begin with the raw amino-acid sequence, 365 residues long: tRNA/tmRNA (uracil-C(5))-methyltransferase (365 aa).

5 residues coordinate S-adenosyl-L-methionine: glutamine 189, tyrosine 217, asparagine 222, glutamate 238, and aspartate 298. Catalysis depends on cysteine 323, which acts as the Nucleophile. Catalysis depends on glutamate 357, which acts as the Proton acceptor.

This sequence belongs to the class I-like SAM-binding methyltransferase superfamily. RNA M5U methyltransferase family. TrmA subfamily.

The enzyme catalyses uridine(54) in tRNA + S-adenosyl-L-methionine = 5-methyluridine(54) in tRNA + S-adenosyl-L-homocysteine + H(+). It carries out the reaction uridine(341) in tmRNA + S-adenosyl-L-methionine = 5-methyluridine(341) in tmRNA + S-adenosyl-L-homocysteine + H(+). Its function is as follows. Dual-specificity methyltransferase that catalyzes the formation of 5-methyluridine at position 54 (m5U54) in all tRNAs, and that of position 341 (m5U341) in tmRNA (transfer-mRNA). The chain is tRNA/tmRNA (uracil-C(5))-methyltransferase from Shewanella baltica (strain OS185).